Here is a 254-residue protein sequence, read N- to C-terminus: Ribonuclease HII (254 aa).

In terms of domain architecture, RNase H type-2 spans 70–254 (TCIAGIDEAG…SFAPVKSVIS (185 aa)). The a divalent metal cation site is built by Asp-76, Glu-77, and Asp-168.

It belongs to the RNase HII family. Requires Mn(2+) as cofactor. Mg(2+) is required as a cofactor.

It is found in the cytoplasm. It catalyses the reaction Endonucleolytic cleavage to 5'-phosphomonoester.. In terms of biological role, endonuclease that specifically degrades the RNA of RNA-DNA hybrids. This chain is Ribonuclease HII, found in Bacillus pumilus (strain SAFR-032).